A 337-amino-acid chain; its full sequence is Glyceraldehyde-3-phosphate dehydrogenase (337 aa).

Residues 12-13, aspartate 34, and arginine 79 contribute to the NAD(+) site; that span reads RI. D-glyceraldehyde 3-phosphate contacts are provided by residues 150–152, threonine 181, 210–211, and arginine 233; these read SCT and TG. The Nucleophile role is filled by cysteine 151. Asparagine 315 contributes to the NAD(+) binding site.

This sequence belongs to the glyceraldehyde-3-phosphate dehydrogenase family. Homotetramer.

It localises to the cytoplasm. It carries out the reaction D-glyceraldehyde 3-phosphate + phosphate + NAD(+) = (2R)-3-phospho-glyceroyl phosphate + NADH + H(+). The protein operates within carbohydrate degradation; glycolysis; pyruvate from D-glyceraldehyde 3-phosphate: step 1/5. The polypeptide is Glyceraldehyde-3-phosphate dehydrogenase (GPD) (Omphalotus olearius (Jack o'lantern)).